The primary structure comprises 181 residues: MKTPEYLAPLREELAAALKQADNAWSFDIFKHTPKLESFTKECLRVFTPSGKKPLQLRSTGRTLSPGTKFSLPAQQAHLDPDNYPNPNIFDGYRFCDPQSGACDIRGTITPSAKWLIFGIGTSACPARLLATRISQTLFFKVLRKYDLRLKLDNGQPEVVYAATNMFVNFNTQMYVKSASI.

Cysteine 125 contacts heme.

It belongs to the cytochrome P450 family. The cofactor is heme.

It functions in the pathway alkaloid biosynthesis. Its pathway is secondary metabolite biosynthesis. Cytochrome P450 monooxygenase; part of the gene cluster that mediates the biosynthesis of the dimeric diketopiperazine alkaloid ditryptophenaline. The nonribosomal peptide synthase dtpA accepts L-tryptophan and L-phenylalanine as its substrates and forms the phenylalanyl-tryptophanyl cyclic dipeptide product cyclophenylalanyltryptophenyl. The N-methyltransferase dtpB is responsible for the N-methylation of cyclophenylalanyltryptophenyl to yield cyclo-N-methylphenylalanyltryptophenyl. The cytochrome P450 monooxygenase is responsible not only for pyrroloindole ring formation but also for concurrent dimerization of N-methylphenylalanyltryptophanyl diketopiperazine monomers into a homodimeric product. This is Cytochrome P450 monooxygenase dtpC from Aspergillus flavus (strain ATCC 200026 / FGSC A1120 / IAM 13836 / NRRL 3357 / JCM 12722 / SRRC 167).